The primary structure comprises 203 residues: uncharacterized protein (203 aa).

The helical transmembrane segment at 171-191 (VGYLSIWLKEYWYLVVLFVLI) threads the bilayer.

It is found in the membrane. This is an uncharacterized protein from Methanocaldococcus jannaschii (strain ATCC 43067 / DSM 2661 / JAL-1 / JCM 10045 / NBRC 100440) (Methanococcus jannaschii).